We begin with the raw amino-acid sequence, 86 residues long: Small ribosomal subunit protein bS20 (86 aa).

Residues 1 to 11 are compositionally biased toward basic residues; it reads MANIKSAKKRA. The tract at residues 1-26 is disordered; sequence MANIKSAKKRAITSEKNRQHNASRRS.

This sequence belongs to the bacterial ribosomal protein bS20 family.

Functionally, binds directly to 16S ribosomal RNA. This Pseudoalteromonas translucida (strain TAC 125) protein is Small ribosomal subunit protein bS20.